The primary structure comprises 923 residues: MKVGWPGESCWQVGLAVEDSPALGAPRVGALPDVVPEGTLLNMVLRRMHRPRSCSYQLLLEHQRPSCIQGLRWTPLTNSEESLDFSESLEQASTERVLRAGRQLHRHLLATCPNLIRDRKYHLRLYRQCCSGRELVDGILALGLGVHSRSQVVGICQVLLDEGALCHVKHDWAFQDRDAQFYRFPGPEPEPVRTHEMEEELAEAVALLSQRGPDALLTVALRKPPGQRTDEELDLIFEELLHIKAVAHLSNSVKRELAAVLLFEPHSKAGTVLFSQGDKGTSWYIIWKGSVNVVTHGKGLVTTLHEGDDFGQLALVNDAPRAATIILREDNCHFLRVDKQDFNRIIKDVEAKTMRLEEHGKVVLVLERASQGAGPSRPPTPGRNRYTVMSGTPEKILELLLEAMGPDSSAHDPTETFLSDFLLTHRVFMPSAQLCAALLHHFHVEPAGGSEQERSTYVCNKRQQILRLVSQWVALYGSMLHTDPVATSFLQKLSDLVGRDTRLSNLLREQWPERRRCHRLENGCGNASPQMKARNLPVWLPNQDEPLPGSSCAIQVGDKVPYDICRPDHSVLTLQLPVTASVREVMAALAQEDGWTKGQVLVKVNSAGDAIGLQPDARGVATSLGLNERLFVVNPQEVHELIPHPDQLGPTVGSAEGLDLVSAKDLAGQLTDHDWSLFNSIHQVELIHYVLGPQHLRDVTTANLERFMRRFNELQYWVATELCLCPVPGPRAQLLRKFIKLAAHLKEQKNLNSFFAVMFGLSNSAISRLAHTWERLPHKVRKLYSALERLLDPSWNHRVYRLALAKLSPPVIPFMPLLLKDMTFIHEGNHTLVENLINFEKMRMMARAARMLHHCRSHNPVPLSPLRSRVSHLHEDSQVARISTCSEQSLSTRSPASTWAYVQQLKVIDNQRELSRLSRELEP.

A Phosphoserine modification is found at serine 79. Residues 110–186 (ATCPNLIRDR…RDAQFYRFPG (77 aa)) enclose the DEP domain. The segment at 218–242 (TVALRKPPGQRTDEELDLIFEELLH) is interaction with PDE3B. Residues 311 to 314 (GQLA) and 321 to 322 (RA) contribute to the 3',5'-cyclic AMP site. The N-terminal Ras-GEF domain occupies 384 to 518 (NRYTVMSGTP…EQWPERRRCH (135 aa)). The tract at residues 398–422 (ELLLEAMGPDSSAHDPTETFLSDFL) is interaction with PDE3B. Residues serine 528 and serine 864 each carry the phosphoserine modification. The Ras-GEF domain occupies 662–889 (SAKDLAGQLT…ARISTCSEQS (228 aa)).

In terms of assembly, interacts with PDE3B and PIK3R6; form a signaling complex that regulates phosphatidylinositol 3-kinase gamma in angiogenesis. As to expression, widely expressed with highest levels in adult kidney, heart, thyroid and brain, and fetal kidney.

It localises to the endomembrane system. Functionally, guanine nucleotide exchange factor (GEF) for RAP1A and RAP2A small GTPases that is activated by binding cAMP. Through simultaneous binding of PDE3B to RAPGEF3 and PIK3R6 is assembled in a signaling complex in which it activates the PI3K gamma complex and which is involved in angiogenesis. Plays a role in the modulation of the cAMP-induced dynamic control of endothelial barrier function through a pathway that is independent on Rho-mediated signaling. Required for the actin rearrangement at cell-cell junctions, such as stress fibers and junctional actin. This Homo sapiens (Human) protein is Rap guanine nucleotide exchange factor 3 (RAPGEF3).